Here is a 547-residue protein sequence, read N- to C-terminus: Nitrate transporter 2.1 (547 aa).

Helical transmembrane passes span 53–73 (WICF…APII), 86–106 (NAGV…GIVV), 113–133 (YGAA…ALVT), 143–163 (FFIG…GTMF), 173–193 (AIAA…MPLI), 211–231 (AFFV…LLGI), 262–280 (LGNY…SFGV), 296–316 (FGLN…MNLF), 338–358 (IWAL…LGKV), 366–386 (IVIM…HFGI), 400–420 (GLVG…WFAG), and 433–453 (GFVY…FIWF).

This sequence belongs to the major facilitator superfamily. Nitrate/nitrite porter (TC 2.A.1.8) family.

It localises to the cell membrane. Nitrite transport mediated by system 1 is very sensitive to inhibition by nitrate. In terms of biological role, involved in nitrate transport, but does not seem to be able to mediate transport by its own. Acts as a dual component transporter with NAR2 (system 1). Imports nitrate with high affinity when expressed with NAR2 in a heterologous system (Xenopus oocytes). Involved in a high affinity and a high capacity transport specific for both nitrate and nitrite. In Chlamydomonas reinhardtii (Chlamydomonas smithii), this protein is Nitrate transporter 2.1.